The primary structure comprises 165 residues: Peptide methionine sulfoxide reductase MsrA (165 aa).

Residue Cys-10 is part of the active site.

This sequence belongs to the MsrA Met sulfoxide reductase family.

It catalyses the reaction L-methionyl-[protein] + [thioredoxin]-disulfide + H2O = L-methionyl-(S)-S-oxide-[protein] + [thioredoxin]-dithiol. It carries out the reaction [thioredoxin]-disulfide + L-methionine + H2O = L-methionine (S)-S-oxide + [thioredoxin]-dithiol. In terms of biological role, has an important function as a repair enzyme for proteins that have been inactivated by oxidation. Catalyzes the reversible oxidation-reduction of methionine sulfoxide in proteins to methionine. The chain is Peptide methionine sulfoxide reductase MsrA from Campylobacter jejuni (strain RM1221).